An 864-amino-acid chain; its full sequence is Ribosome biogenesis protein ERB1 (864 aa).

The span at 1–52 (MAVDKGRRPVPPERRAQGRKRAEPGDVTIRETRTRPVHTPEPEPELLAKDGI) shows a compositional bias: basic and acidic residues. Disordered regions lie at residues 1 to 153 (MAVD…VKEG) and 191 to 231 (ESRN…STED). Over residues 53–71 (LELEDDDDNDDDDDDDDDD) the composition is skewed to acidic residues. Residues 72 to 83 (KSNHHDGAPKNE) are compositionally biased toward basic and acidic residues. The span at 100–135 (DDGDEDEEEDDEDEDEDASDDEAFDSDDLENWDEEA) shows a compositional bias: acidic residues. WD repeat units lie at residues 509 to 549 (AHAP…CVAT), 559 to 599 (ADRS…KTMY), 694 to 732 (NSAMAVQCVCFHPSRPWLFVATQRYVRVYDLVQQSLVKT), 735 to 774 (PGVRWISSLDVHPSGDHVIIGSYDRRVLWFDLDLSERPYK), 778 to 817 (YHSRAVRAVAYHPRFPLFASAADDGTVHVYHGTVYSDLLQ), and 833 to 864 (QDALGVLSIAWHPTLPWLVSAGADGDARLWTP).

The protein belongs to the WD repeat BOP1/ERB1 family. In terms of assembly, component of the NOP7 complex, composed of ERB1, NOP7 and YTM1. The complex is held together by ERB1, which interacts with NOP7 via its N-terminal domain and with YTM1 via a high-affinity interaction between the seven-bladed beta-propeller domains of the 2 proteins. The NOP7 complex associates with the 66S pre-ribosome.

It is found in the nucleus. The protein localises to the nucleolus. Its subcellular location is the nucleoplasm. Component of the NOP7 complex, which is required for maturation of the 25S and 5.8S ribosomal RNAs and formation of the 60S ribosome. The protein is Ribosome biogenesis protein ERB1 of Malassezia globosa (strain ATCC MYA-4612 / CBS 7966) (Dandruff-associated fungus).